The primary structure comprises 490 residues: Lignostilbene-alpha,beta-dioxygenase isozyme III (490 aa).

4 residues coordinate Fe cation: His167, His218, His285, and His477.

This sequence belongs to the carotenoid oxygenase family. Homodimer of two beta subunits. Fe(2+) is required as a cofactor.

The enzyme catalyses 1,2-bis(4-hydroxy-3-methoxyphenyl)ethylene + O2 = 2 vanillin. Its activity is regulated as follows. Activity is high with beta-5 type stilbene and minimal with beta-1 type stilbene. A 4-hydroxyl group and trans-stilbene structure is essential for the binding of substrates to the enzyme. Catalyzes the cleavage of the interphenyl double bond (C alpha-C beta) of lignin-derived polyphenolic diaryl-propane type compounds (Stilbene). The protein is Lignostilbene-alpha,beta-dioxygenase isozyme III of Sphingomonas paucimobilis (Pseudomonas paucimobilis).